The primary structure comprises 210 residues: Na(+)-translocating NADH-quinone reductase subunit D (210 aa).

6 helical membrane passes run 14 to 34, 42 to 62, 72 to 92, 103 to 123, 131 to 151, and 178 to 198; these read PIVN…ALAV, LVMA…ISLI, IIVQ…LLQA, VFVG…AYAM, FMDG…VGFV, and NGML…IWII.

Belongs to the NqrDE/RnfAE family. In terms of assembly, composed of six subunits; NqrA, NqrB, NqrC, NqrD, NqrE and NqrF.

The protein resides in the cell inner membrane. The catalysed reaction is a ubiquinone + n Na(+)(in) + NADH + H(+) = a ubiquinol + n Na(+)(out) + NAD(+). In terms of biological role, NQR complex catalyzes the reduction of ubiquinone-1 to ubiquinol by two successive reactions, coupled with the transport of Na(+) ions from the cytoplasm to the periplasm. NqrA to NqrE are probably involved in the second step, the conversion of ubisemiquinone to ubiquinol. The protein is Na(+)-translocating NADH-quinone reductase subunit D of Shewanella putrefaciens (strain CN-32 / ATCC BAA-453).